The chain runs to 623 residues: Xaa-Pro aminopeptidase 1 (623 aa).

R77 serves as a coordination point for a peptide. The residue at position 304 (K304) is an N6-acetyllysine. H395 contacts a peptide. D415, D426, and H489 together coordinate Mn(2+). The a peptide site is built by H489, H498, and E523. Residues E523 and E537 each contribute to the Mn(2+) site.

This sequence belongs to the peptidase M24B family. As to quaternary structure, homodimer. Mn(2+) serves as cofactor. Expressed in all tissues tested, including liver, adrenal decapsular tissue, adrenal capsular tissue, corpus luteum, testis, submandibular gland, thymus, brain, cerebellum and heart. Highest levels in testis.

Its subcellular location is the cytoplasm. It catalyses the reaction Release of any N-terminal amino acid, including proline, that is linked to proline, even from a dipeptide or tripeptide.. Its activity is regulated as follows. Inhibited by inositol hexakisphosphate. Functionally, metalloaminopeptidase that catalyzes the removal of a penultimate prolyl residue from the N-termini of peptides, such as Arg-Pro-Pro. Contributes to the degradation of bradykinin. In Rattus norvegicus (Rat), this protein is Xaa-Pro aminopeptidase 1.